The chain runs to 332 residues: MQKNILVLGAGAWGTALALQLAYRGHNVRINSWKAEHNEQMLKDNNNHKYLPSIEKFPSRLKAIQDWQANISEFDNILVATPSSGFKNTILELKEYILPQQNIISATKGFCHDSYALLSEIAEDILPTTKFALLTGPSFAKELANQLPTAVVVASKDIAYARYVQELFSNENFRCYTTTDIIGAQVGGAVKNVLAITAGIAAGMEFGVNAHAALITRGLAEIKKLGLKLGANSETFIGLSCLGDLLLTCSDNQSRNRRFGLYLGQGMTIQQALKEVNNVVEGYFTAKAVYNLAKKHNVEMPLVFATYRILYEAADPRDIVKELMTRQLKNEN.

Positions 13, 34, and 108 each coordinate NADPH. K108, G136, and S138 together coordinate sn-glycerol 3-phosphate. A140 contacts NADPH. Sn-glycerol 3-phosphate-binding residues include K191, D244, S254, R255, and N256. Catalysis depends on K191, which acts as the Proton acceptor. R255 contacts NADPH. NADPH-binding residues include V279 and E281.

It belongs to the NAD-dependent glycerol-3-phosphate dehydrogenase family.

The protein resides in the cytoplasm. It catalyses the reaction sn-glycerol 3-phosphate + NAD(+) = dihydroxyacetone phosphate + NADH + H(+). The enzyme catalyses sn-glycerol 3-phosphate + NADP(+) = dihydroxyacetone phosphate + NADPH + H(+). It participates in membrane lipid metabolism; glycerophospholipid metabolism. Catalyzes the reduction of the glycolytic intermediate dihydroxyacetone phosphate (DHAP) to sn-glycerol 3-phosphate (G3P), the key precursor for phospholipid synthesis. This is Glycerol-3-phosphate dehydrogenase [NAD(P)+] from Francisella tularensis subsp. novicida (strain U112).